The sequence spans 491 residues: MNTQQLAKLRSIVPEMRRVRHIHFVGIGGAGMGGIAEVLANEGYQISGSDLAPNPVTQQLMNLGVTIYFNHRPENVRDASVVVVSSAISADNPEIVAAHEARIPVIRRAEMLAELMRFRHGIAIAGTHGKTTTTAMVSSIYAEAGLDPTFVNGGLVKAAGVHARLGHGRYLIAEADESDASFLHLQPMVAIVTNIEADHMDTYQGDFENLKQTFINFLHNLPFYGRAVMCVDDPVIRELLPRVGRQTTTYGFSEDADVRVEDYQQIGPQGHFTLLRQDKEPIRVTLNAPGRHNALNAAAAVAVATEEGIDDEAILRALESFQGTGRRFDFLGEFPLAPVNGKSGTAMLVDDYGHHPTEVDATIKAARAGWPDKNLVMLFQPHRFTRTRDLYDDFANVLTQVDTLLMLEVYPAGEAPIPGADSRSLCRTIRGRGKIDPILVPDPAQVAEMLAPVLTGNDLILVQGAGNIGKIARSLAEIKLKPQTPEEEQHD.

126 to 132 (GTHGKTT) lines the ATP pocket.

It belongs to the MurCDEF family.

It localises to the cytoplasm. It carries out the reaction UDP-N-acetyl-alpha-D-muramate + L-alanine + ATP = UDP-N-acetyl-alpha-D-muramoyl-L-alanine + ADP + phosphate + H(+). Its pathway is cell wall biogenesis; peptidoglycan biosynthesis. Functionally, cell wall formation. This chain is UDP-N-acetylmuramate--L-alanine ligase, found in Shigella dysenteriae serotype 1 (strain Sd197).